The following is a 3033-amino-acid chain: MSTNPKPQRKTKRNTNRRPQDVKFPGGGQIVGGVYLLPRRGPRLGVRATRKTSERSQPRGRRQPIPKDRRSTGKSWGKPGYPWPLYGNEGLGWAGWLLSPRGSRPSWGPNDPRHRSRNVGKVIDTLTCGFADLMGYIPVVGAPLGGVARALAHGVRVLEDGVNFATGNLPGCSFSIFLLALLSCITTPVSAAEVKNISTGYMVTNDCTNDSITWQLQAAVLHVPGCVPCEKVGNTSRCWIPVSPNVAVQQPGALTQGLRTHIDMVVMSATLCSALYVGDLCGGVMLAAQMFIVSPQHHWFVQDCNCSIYPGTITGHRMAWDMMMNWSPTATMILAYAMRVPEVIIDIIGGAHWGVMFGLAYFSMQGAWAKVVVILLLAAGVDAQTHTVGGSTAHNARTLTGMFSLGARQKIQLINTNGSWHINRTALNCNDSLHTGFLASLFYTHSFNSSGCPERMSACRSIEAFRVGWGALQYEDNVTNPEDMRPYCWHYPPRQCGVVSASSVCGPVYCFTPSPVVVGTTDRLGAPTYTWGENETDVFLLNSTRPPQGSWFGCTWMNSTGYTKTCGAPPCRIRADFNASMDLLCPTDCFRKHPDTTYIKCGSGPWLTPRCLIDYPYRLWHYPCTVNYTIFKIRMYVGGVEHRLTAACNFTRGDRCNLEDRDRSQLSPLLHSTTEWAILPCTYSDLPALSTGLLHLHQNIVDVQFMYGLSPALTKYIVRWEWVVLLFLLLADARVCACLWMLILLGQAEAALEKLVVLHAASAASCNGFLYFVIFFVAAWYIKGRVVPLATYSLTGLWSFGLLLLALPQQAYAYDASVHGQIGAALLVLITLFTLTPGYKTLLSRFLWWLCYLLTLAEAMVQEWAPPMQVRGGRDGIIWAVAIFCPGVVFDITKWLLAVLGPAYLLKGALTRVPYFVRAHALLRMCTMVRHLAGGRYVQMVLLALGRWTGTYIYDHLTPMSDWAANGLRDLAVAVEPIIFSPMEKKVIVWGAETAACGDILHGLPVSARLGREVLLGPADGYTSKGWSLLAPITAYAQQTRGLLGTIVVSMTGRDKTEQAGEIQVLSTVTQSFLGTTISGVLWTVYHGAGNKTLAGSRGPVTQMYSSAEGDLVGWPSPPGTKSLEPCTCGAVDLYLVTRNADVIPARRRGDKRGALLSPRPLSTLKGSSGGPVLCPRGHAVGVFRAAVCSRGVAKSIDFIPVETLDIVTRSPTFSDNSTPPAVPQTYQVGYLHAPTGSGKSTKVPVAYAAQGYKVLVLNPSVAATLGFGAYLSKAHGINPNIRTGVRTVTTGAPITYSTYGKFLADGGCAGGAYDIIICDECHAVDSTTILGIGTVLDQAETAGVRLTVLATATPPGSVTTPHPNIEEVALGQEGEIPFYGRAIPLSYIKGGRHLIFCHSKKKCDELAAALRGMGLNAVAYYRGLDVSVIPTQGDVVVVATDALMTGFTGDFDSVIDCNVAVTQVVDFSLDPTFTITTQTVPQDAVSRSQRRGRTGRGRLGIYRYVSTGERASGMFDSVVLCECYDAGAAWYELTPAETTVRLRAYFNTPGLPVCQDHLEFWEAVFTGLTHIDAHFLSQTKQSGENFAYLTAYQATVCARAKAPPPSWDVMWKCLTRLKPTLVGPTPLLYRLGSVTNEVTLTHPVTKYIATCMQADLEVMTSTWVLAGGVLAAVAAYCLATGCVCIIGRLHVNQRAVVAPDKEVLYEAFDEMEECASRAALIEEGQRIAEMLKSKIQGLLQQASKQAQDIQPAVQASWPKVEQFWAKHMWNFISGIQYLAGLSTLPGNPAVASMMAFSAALTSPLSTSTTILLNILGGWLASQIAPPAGATGFVVSGLVGAAVGSIGLGKVLVDILAGYGAGISGALVAFKIMSGEKPSMEDVVNLLPGILSPGALVVGVICAAILRRHVGPGEGAVQWMNRLIAFASRGNHVAPTHYVTESDASQRVTQLLGSLTITSLLRRLHNWITEDCPIPCSGSWLRDVWDWVCTILTDFKNWLTSKLFPKMPGLPFISCQKGYKGVWAGTGIMTTRCPCGANISGNVRLGSMRITGPKTCMNIWQGTFPINCYTEGQCVPKPAPNFKIAIWRVAASEYAEVTQHGSYHYITGLTTDNLKVPCQLPSPEFFSWVDGVQIHRFAPIPKPFFRDEVSFCVGLNSFVVGSQLPCDPEPDTDVLTSMLTDPSHITAETAARRLARGSPPSEASSSASQLSAPSLRATCTTHGKAYDVDMVDANLFMGGDVTRIESESKVVVLDSLDPMVEERSDLEPSIPSEYMLPKKRFPPALPAWARPDYNPPLVESWKRPDYQPATVAGCALPPPKKTPTPPPRRRRTVGLSESSIADALQQLAIKSFGQPPPSGDSGLSTGADAADSGSRTPPDELALSETGSISSMPPLEGEPGDPDLEPEQVELQPPPQGGVVTPGSGSGSWSTCSEEDDSVVCCSMSYSWTGALITPCSPEEEKLPINPLSNSLLRYHNKVYCTTSKSASLRAKKVTFDRMQALDAHYDSVLKDIKLAASKVTARLLTLEEACQLTPPHSARSKYGFGAKEVRSLSGRAVNHIKSVWKDLLEDTQTPIPTTIMAKNEVFCVDPTKGGKKAARLIVYPDLGVRVCEKMALYDITQKLPQAVMGASYGFQYSPAQRVEFLLKAWAEKKDPMGFSYDTRCFDSTVTERDIRTEESIYRACSLPEEAHTAIHSLTERLYVGGPMFNSKGQTCGYRRCRASGVLTTSMGNTITCYVKALAACKAAGIIAPTMLVCGDDLVVISESQGTEEDERNLRAFTEAMTRYSAPPGDPPRPEYDLELITSCSSNVSVALGPQGRRRYYLTRDPTTPIARAAWETVRHSPVNSWLGNIIQYAPTIWARMVLMTHFFSILMAQDTLDQNLNFEMYGAVYSVSPLDLPAIIERLHGLDAFSLHTYTPHELTRVASALRKLGAPPLRAWKSRARAVRASLISRGGRAAVCGRYLFNWAVKTKLKLTPLPEARLLDLSSWFTVGAGGGDIYHSVSRARPRLLLLGLLLLFVGVGLFLLPAR.

Residue Ser-2 is modified to N-acetylserine; by host. The tract at residues 2 to 23 (STNPKPQRKTKRNTNRRPQDVK) is interaction with STAT1. Residues 2 to 58 (STNPKPQRKTKRNTNRRPQDVKFPGGGQIVGGVYLLPRRGPRLGVRATRKTSERSQP) are interaction with EIF2AK2/PKR. The tract at residues 2-59 (STNPKPQRKTKRNTNRRPQDVKFPGGGQIVGGVYLLPRRGPRLGVRATRKTSERSQPR) is interaction with DDX3X. Positions 2–75 (STNPKPQRKT…PKDRRSTGKS (74 aa)) are disordered. Over 2–168 (STNPKPQRKT…EDGVNFATGN (167 aa)) the chain is Cytoplasmic. 2 short sequence motifs (nuclear localization signal) span residues 5–13 (PKPQRKTKR) and 38–43 (PRRGPR). A compositionally biased stretch (basic residues) spans 7-16 (PQRKTKRNTN). The span at 32 to 47 (GGVYLLPRRGPRLGVR) shows a compositional bias: low complexity. A Phosphoserine; by host modification is found at Ser-53. Short sequence motifs (nuclear localization signal) lie at residues 58–64 (PRGRRQP) and 66–71 (PKDRRS). Position 99 is a phosphoserine; by host (Ser-99). The interval 112-152 (PRHRSRNVGKVIDTLTCGFADLMGYIPVVGAPLGGVARALA) is important for endoplasmic reticulum and mitochondrial localization. Phosphoserine; by host PKA is present on Ser-116. The interaction with APOA2 stretch occupies residues 122 to 173 (VIDTLTCGFADLMGYIPVVGAPLGGVARALAHGVRVLEDGVNFATGNLPGCS). Residues 164 to 167 (FATG) form an important for lipid droplets localization region. Residues 169-189 (LPGCSFSIFLLALLSCITTPV) traverse the membrane as a helical segment. Residues 178 to 191 (LLALLSCITTPVSA) constitute a propeptide, ER anchor for the core protein, removed in mature form by host signal peptidase. The Lumenal portion of the chain corresponds to 190–358 (SAAEVKNIST…GGAHWGVMFG (169 aa)). Asn-196, Asn-209, and Asn-234 each carry an N-linked (GlcNAc...) asparagine; by host glycan. The segment at 265-296 (VVMSATLCSALYVGDLCGGVMLAAQMFIVSPQ) is important for fusion. Asn-305 is a glycosylation site (N-linked (GlcNAc...) asparagine; by host). The chain crosses the membrane as a helical span at residues 359 to 379 (LAYFSMQGAWAKVVVILLLAA). The Lumenal segment spans residues 380-729 (GVDAQTHTVG…WEWVVLLFLL (350 aa)). The interval 385 to 411 (THTVGGSTAHNARTLTGMFSLGARQKI) is HVR1. N-linked (GlcNAc...) (high mannose) asparagine; by host glycosylation is found at Asn-417, Asn-423, Asn-430, and Asn-448. Disulfide bonds link Cys-429–Cys-554, Cys-452–Cys-459, Cys-488–Cys-496, and Cys-505–Cys-510. N-linked (GlcNAc...) (high mannose) asparagine; by host glycosylation is present at Asn-477. Residues 484–496 (MRPYCWHYPPRQC) are CD81-binding 1. A CD81-binding 2 region spans residues 524 to 555 (LGAPTYTWGENETDVFLLNSTRPPQGSWFGCT). N-linked (GlcNAc...) (high mannose) asparagine; by host glycosylation is found at Asn-534, Asn-542, and Asn-558. Cys-566 and Cys-571 form a disulfide bridge. Asn-578 is a glycosylation site (N-linked (GlcNAc...) (high mannose) asparagine; by host). 3 cysteine pairs are disulfide-bonded: Cys-585-Cys-589, Cys-601-Cys-624, and Cys-611-Cys-648. Residues Asn-627 and Asn-649 are each glycosylated (N-linked (GlcNAc...) (high mannose) asparagine; by host). The cysteines at positions 656 and 681 are disulfide-linked. An EIF2AK2/eIF2-alpha phosphorylation homology domain (PePHD) region spans residues 664 to 675 (SQLSPLLHSTTE). Residues 730–750 (LADARVCACLWMLILLGQAEA) form a helical membrane-spanning segment. Topologically, residues 751–761 (ALEKLVVLHAA) are lumenal. A helical transmembrane segment spans residues 762-782 (SAASCNGFLYFVIFFVAAWYI). At 783–786 (KGRV) the chain is on the cytoplasmic side. Residues 787-807 (VPLATYSLTGLWSFGLLLLAL) form a helical membrane-spanning segment. Residues 808-817 (PQQAYAYDAS) lie on the Lumenal side of the membrane. The chain crosses the membrane as a helical span at residues 818-838 (VHGQIGAALLVLITLFTLTPG). The Cytoplasmic portion of the chain corresponds to 839–885 (YKTLLSRFLWWLCYLLTLAEAMVQEWAPPMQVRGGRDGIIWAVAIFC). The chain crosses the membrane as a helical span at residues 886-906 (PGVVFDITKWLLAVLGPAYLL). Topologically, residues 907–932 (KGALTRVPYFVRAHALLRMCTMVRHL) are lumenal. The Peptidase C18 domain occupies 907 to 1030 (KGALTRVPYF…GYTSKGWSLL (124 aa)). Positions 908-1210 (GALTRVPYFV…PVETLDIVTR (303 aa)) are protease NS2-3. Cys-926 is lipidated: S-palmitoyl cysteine; by host. The chain crosses the membrane as a helical span at residues 933–953 (AGGRYVQMVLLALGRWTGTYI). Residues 933–953 (AGGRYVQMVLLALGRWTGTYI) are interaction with host SCPS1. The Cytoplasmic portion of the chain corresponds to 954–1661 (YDHLTPMSDW…CMQADLEVMT (708 aa)). Residues His-956, Glu-976, and Cys-997 each act as for protease NS2 activity; shared with dimeric partner in the active site. In terms of domain architecture, Peptidase S29 spans 1031 to 1212 (APITAYAQQT…ETLDIVTRSP (182 aa)). Catalysis depends on charge relay system; for serine protease NS3 activity residues His-1087 and Asp-1111. Residues Cys-1127 and Cys-1129 each coordinate Zn(2+). Ser-1169 acts as the Charge relay system; for serine protease NS3 activity in catalysis. Zn(2+)-binding residues include Cys-1175 and His-1179. A Helicase ATP-binding domain is found at 1221-1373 (PAVPQTYQVG…PNIEEVALGQ (153 aa)). 1234-1241 (APTGSGKS) serves as a coordination point for ATP. Mg(2+) contacts are provided by Ser-1241 and Glu-1321. The short motif at 1320–1323 (DECH) is the DECH box element. The tract at residues 1490 to 1501 (QRRGRTGRGRLG) is RNA-binding. The helical transmembrane segment at 1662 to 1682 (STWVLAGGVLAAVAAYCLATG) threads the bilayer. Residues 1683 to 1694 (CVCIIGRLHVNQ) form an NS3-binding region. At 1683–1809 (CVCIIGRLHV…ALTSPLSTST (127 aa)) the chain is on the cytoplasmic side. Residues 1810-1830 (TILLNILGGWLASQIAPPAGA) traverse the membrane as a helical segment. Residues 1831–1832 (TG) are Lumenal-facing. Residues 1833-1853 (FVVSGLVGAAVGSIGLGKVLV) traverse the membrane as a helical segment. A glycine zipper region spans residues 1837 to 1865 (GLVGAAVGSIGLGKVLVDILAGYGAGISG). A topological domain (cytoplasmic) is located at residue Asp-1854. Residues 1855–1875 (ILAGYGAGISGALVAFKIMSG) traverse the membrane as a helical segment. The Lumenal portion of the chain corresponds to 1876-1885 (EKPSMEDVVN). The chain crosses the membrane as a helical span at residues 1886–1906 (LLPGILSPGALVVGVICAAIL). Residues 1907–1976 (RRHVGPGEGA…WITEDCPIPC (70 aa)) lie on the Cytoplasmic side of the membrane. Cys-1972 carries the S-palmitoyl cysteine; by host lipid modification. A lipid anchor (S-palmitoyl cysteine; by host; partial) is attached at Cys-1976. Residues 1977–2007 (SGSWLRDVWDWVCTILTDFKNWLTSKLFPKM) lie within the membrane without spanning it. Residues 1982–2002 (RDVWDWVCTILTDFKNWLTSK) are membrane-binding. At 2008-3012 (PGLPFISCQK…YHSVSRARPR (1005 aa)) the chain is on the cytoplasmic side. Residues 2009 to 2225 (GLPFISCQKG…RATCTTHGKA (217 aa)) form an RNA-binding region. Cys-2015, Cys-2033, Cys-2035, and Cys-2056 together coordinate Zn(2+). Tyr-2069 carries the phosphotyrosine; by host modification. The tract at residues 2124–2212 (EFFSWVDGVQ…ASSSASQLSA (89 aa)) is FKBP8-binding. Residues 2124 to 2332 (EFFSWVDGVQ…PTPPPRRRRT (209 aa)) are transcriptional activation. Positions 2139 to 2143 (PIPKP) are interaction with non-structural protein 4A. 2 disordered regions span residues 2193–2214 (RLAR…SAPS) and 2309–2335 (ATVA…TVGL). Ser-2198 is modified (phosphoserine; by host; in p56). The segment covering 2198–2214 (SPPSEASSSASQLSAPS) has biased composition (low complexity). At Ser-2201 the chain carries Phosphoserine; by host; in p58. Phosphoserine; by host; in p56 and p58, regulates intracellular NS5A distribution is present on Ser-2205. Phosphoserine; by host; in p58 occurs at positions 2208, 2211, and 2214. Positions 2210-2249 (LSAPSLRATCTTHGKAYDVDMVDANLFMGGDVTRIESESK) are ISDR. An interaction with EIF2AK2/PKR region spans residues 2214–2275 (SLRATCTTHG…LEPSIPSEYM (62 aa)). The interval 2253–2310 (LDSLDPMVEERSDLEPSIPSEYMLPKKRFPPALPAWARPDYNPPLVESWKRPDYQPAT) is NS4B-binding. The span at 2316-2326 (LPPPKKTPTPP) shows a compositional bias: pro residues. The SH3-binding motif lies at 2322 to 2325 (TPTP). Phosphothreonine; by host is present on Thr-2324. The short motif at 2326 to 2334 (PPRRRRTVG) is the Nuclear localization signal element. The segment at 2336–2447 (SESSIADALQ…SVVCCSMSYS (112 aa)) is interaction with host IFI27. Lys-2350 is covalently cross-linked (Glycyl lysine isopeptide (Lys-Gly) (interchain with G-Cter in ubiquitin)). Positions 2351–2431 (SFGQPPPSGD…PGSGSGSWST (81 aa)) are disordered. The tract at residues 2358 to 2381 (SGDSGLSTGADAADSGSRTPPDEL) is V3. The span at 2398 to 2408 (EPGDPDLEPEQ) shows a compositional bias: acidic residues. The segment covering 2417 to 2431 (GGVVTPGSGSGSWST) has biased composition (low complexity). One can recognise a RdRp catalytic domain in the interval 2656 to 2774 (PMGFSYDTRC…ISESQGTEED (119 aa)). 3 residues coordinate Mg(2+): Asp-2662, Asp-2760, and Asp-2761. A helical membrane pass occupies residues 3013 to 3033 (LLLLGLLLLFVGVGLFLLPAR).

Belongs to the hepacivirus polyprotein family. In terms of assembly, homooligomer. Interacts with E1 (via C-terminus). Interacts with the non-structural protein 5A. Interacts (via N-terminus) with host STAT1 (via SH2 domain); this interaction results in decreased STAT1 phosphorylation and ubiquitin-mediated proteasome-dependent STAT1 degradation, leading to decreased IFN-stimulated gene transcription. Interacts with host STAT3; this interaction constitutively activates STAT3. Interacts with host LTBR receptor. Interacts with host TNFRSF1A receptor and possibly induces apoptosis. Interacts with host HNRPK. Interacts with host YWHAE. Interacts with host UBE3A/E6AP. Interacts with host DDX3X. Interacts with host APOA2. Interacts with host RXRA protein. Interacts with host SP110 isoform 3/Sp110b; this interaction sequesters the transcriptional corepressor SP110 away from the nucleus. Interacts with host CREB3 nuclear transcription protein; this interaction triggers cell transformation. Interacts with host ACY3. Interacts with host C1QR1. Interacts with host RBM24; this interaction, which enhances the interaction of the mature core protein with 5'-UTR, may inhibit viral translation and favor replication. Interacts with host EIF2AK2/PKR; this interaction induces the autophosphorylation of EIF2AK2. Part of the viral assembly initiation complex composed of NS2, E1, E2, NS3, NS4A, NS5A and the mature core protein. As to quaternary structure, forms a heterodimer with envelope glycoprotein E2. Interacts with mature core protein. Interacts with protease NS2. The heterodimer E1/E2 interacts with host CLDN1; this interaction plays a role in viral entry into host cell. Interacts with host SPSB2 (via C-terminus). Part of the viral assembly initiation complex composed of NS2, E1, E2, NS3, NS4A, NS5A and the mature core protein. Interacts with host NEURL3; this interaction prevents E1 binding to glycoprotein E2. Forms a heterodimer with envelope glycoprotein E1. Interacts with host CD81 and SCARB1 receptors; this interaction may play a role in viral entry into host cell. Interacts with host EIF2AK2/PKR; this interaction inhibits EIF2AK2 and probably allows the virus to evade the innate immune response. Interacts with host CD209/DC-SIGN and CLEC4M/DC-SIGNR. Interact with host SPCS1; this interaction is essential for viral particle assembly. Interacts with protease NS2. The heterodimer E1/E2 interacts with host CLDN1; this interaction plays a role in viral entry into host cell. Part of the viral assembly initiation complex composed of NS2, E1, E2, NS3, NS4A, NS5A and the mature core protein. Interacts with host SLC3A2/4F2hc; the interaction may facilitate viral entry into host cell. Interacts with human PLSCR1. In terms of assembly, homohexamer. Homoheptamer. Interacts with protease NS2. As to quaternary structure, homodimer. Interacts with host SPCS1; this interaction is essential for viral particle assembly. Interacts with envelope glycoprotein E1. Interacts with envelope glycoprotein E2. Interacts with viroporin p7. Interacts with serine protease/helicase NS3. Part of the replication complex composed of NS2, NS3, NS4A, NS4B, NS5A and the RNA-directed RNA polymerase embedded in an ER-derived membranous web. Part of the viral assembly initiation complex composed of NS2, E1, E2, NS3, NS4A, NS5A and the mature core protein. Interacts with protease NS2. Interacts with non-structural protein 4A; this interaction stabilizes the folding of NS3 serine protease. NS3-NS4A interaction is essential for NS3 activation and allows membrane anchorage of the latter. NS3/NS4A complex also prevents phosphorylation of host IRF3, thus preventing the establishment of dsRNA induced antiviral state. Interacts with host MAVS; this interaction leads to the cleavage and inhibition of host MAVS. Interacts with host TICAM1; this interaction leads to the cleavage and inhibition of host TICAM1. Interacts with host TANK-binding kinase/TBK1; this interaction results in the inhibition of the association between TBK1 and IRF3, which leads to the inhibition of IRF3 activation. Interacts with host RBM24. Part of the replication complex composed of NS2, NS3, NS4A, NS4B, NS5A and the RNA-directed RNA polymerase embedded in an ER-derived membranous web. Part of the viral assembly initiation complex composed of NS2, E1, E2, NS3, NS4A, NS5A and the mature core protein. In terms of assembly, interacts with NS3 serine protease; this interaction stabilizes the folding of NS3 serine protease. NS3-NS4A interaction is essential for NS3 activation and allows membrane anchorage of the latter. Interacts with non-structural protein 5A (via N-terminus). Part of the replication complex composed of NS2, NS3, NS4A, NS4B, NS5A and the RNA-directed RNA polymerase embedded in an ER-derived membranous web. Part of the viral assembly initiation complex composed of NS2, E1, E2, NS3, NS4A, NS5A and the mature core protein. As to quaternary structure, homomultimer. Interacts with non-structural protein NS5A. Interacts with host PLA2G4C; this interaction likely initiates the recruitment of replication complexes to lipid droplets. Interacts with host STING; this interaction disrupts the interaction between STING and TBK1 thereby suppressing the interferon signaling. Part of the replication complex composed of NS2, NS3, NS4A, NS4B, NS5A and the RNA-directed RNA polymerase embedded in an ER-derived membranous web. Monomer. Homodimer; dimerization is required for RNA-binding. Interacts with the mature core protein. Interacts (via N-terminus) with non-structural protein 4A. Interacts with non-structural protein 4B. Interacts (via region D2) with RNA-directed RNA polymerase. Part of the viral assembly initiation complex composed of NS2, E1, E2, NS3, NS4A, NS5A and the mature core protein. Part of the replication complex composed of NS2, NS3, NS4A, NS4B, NS5A and the RNA-directed RNA polymerase embedded in an ER-derived membranous web. Interacts with host GRB2. Interacts with host BIN1. Interacts with host PIK3R1. Interacts with host SRCAP. Interacts with host FKBP8. Interacts (via C-terminus) with host VAPB (via MSP domain). Interacts with host EIF2AK2/PKR; this interaction leads to disruption of EIF2AK2 dimerization by NS5A and probably allows the virus to evade the innate immune response. Interacts (via N-terminus) with host PACSIN2 (via N-terminus); this interaction attenuates protein kinase C alpha-mediated phosphorylation of PACSIN2 by disrupting the interaction between PACSIN2 and PRKCA. Interacts (via N-terminus) with host SRC kinase (via SH2 domain). Interacts with most Src-family kinases. Interacts with host IFI27 and SKP2; promotes the ubiquitin-mediated proteasomal degradation of NS5A. Interacts with host GPS2. Interacts with host TNFRSF21; this interaction allows the modulation by the virus of JNK, p38 MAPK, STAT3, and Akt signaling pathways in a DR6-dependent manner. Interacts (via N-terminus) with host CIDEB (via N-terminus); this interaction seems to regulate the association of HCV particles with APOE. Interacts with host CHKA/Choline Kinase-alpha; CHKA bridges host PI4KA and NS5A and potentiates NS5A-stimulated PI4KA activity, which then facilitates the targeting of the ternary complex to the ER for viral replication. Interacts with host SPSB2 (via C-terminus); this interaction targets NS5A for ubiquitination and degradation. Interacts with host RAB18; this interaction may promote the association of NS5A and other replicase components with lipid droplets. Interacts (via region D2) with host PPIA/CYPA; the interaction stimulates RNA-binding ability of NS5A and is dependent on the peptidyl-prolyl cis-trans isomerase activity of PPIA/CYPA. Interacts with host TRIM14; this interaction induces the degradation of NS5A. In terms of assembly, homooligomer. Interacts with non-structural protein 5A. Interacts with host VAPB. Interacts with host PRK2/PKN2. Interacts with host HNRNPA1 and SEPT6; these interactions facilitate viral replication. Part of the replication complex composed of NS2, NS3, NS4A, NS4B, NS5A and the RNA-directed RNA polymerase. Zn(2+) is required as a cofactor. Mg(2+) serves as cofactor. In terms of processing, specific enzymatic cleavages in vivo yield mature proteins. The structural proteins, core, E1, E2 and p7 are produced by proteolytic processing by host signal peptidases. The core protein precursor is synthesized as a 23 kDa, which is retained in the ER membrane through the hydrophobic signal peptide. Cleavage by the signal peptidase releases the 21 kDa mature core protein. The cleavage of the core protein precursor occurs between aminoacids 176 and 188 but the exact cleavage site is not known. Some degraded forms of the core protein appear as well during the course of infection. The other proteins (p7, NS2, NS3, NS4A, NS4B, NS5A and NS5B) are cleaved by the viral proteases. Autoprocessing between NS2 and NS3 is mediated by the NS2 cysteine protease catalytic domain and regulated by the NS3 N-terminal domain. Post-translationally, phosphorylated by host PKC and PKA. Ubiquitinated; mediated by UBE3A and leading to core protein subsequent proteasomal degradation. In terms of processing, highly N-glycosylated. Post-translationally, palmitoylation is required for NS2/3 autoprocessing and E2 recruitment to membranes. Palmitoylated. This modification may play a role in its polymerization or in protein-protein interactions. In terms of processing, phosphorylated on serines in a basal form termed p56. p58 is a hyperphosphorylated form of p56. p56 and p58 coexist in the cell in roughly equivalent amounts. Hyperphosphorylation is dependent on the presence of NS4A. Host CSNK1A1/CKI-alpha or RPS6KB1 kinases may be responsible for NS5A phosphorylation. Post-translationally, tyrosine phosphorylation is essential for the interaction with host SRC. The N-terminus is phosphorylated by host PRK2/PKN2.

It localises to the host endoplasmic reticulum membrane. It is found in the host mitochondrion membrane. The protein resides in the virion. Its subcellular location is the host cytoplasm. The protein localises to the host nucleus. It localises to the host lipid droplet. It is found in the virion membrane. The protein resides in the host mitochondrion. Its subcellular location is the host cell membrane. The protein localises to the host perinuclear region. The catalysed reaction is Hydrolysis of four peptide bonds in the viral precursor polyprotein, commonly with Asp or Glu in the P6 position, Cys or Thr in P1 and Ser or Ala in P1'.. The enzyme catalyses a ribonucleoside 5'-triphosphate + H2O = a ribonucleoside 5'-diphosphate + phosphate + H(+). It carries out the reaction ATP + H2O = ADP + phosphate + H(+). It catalyses the reaction RNA(n) + a ribonucleoside 5'-triphosphate = RNA(n+1) + diphosphate. Inhibited by the antiviral drug hexamethylene amiloride. Inhibition by amantadine appears to be genotype-dependent. Also inhibited by long-alkyl-chain iminosugar derivatives. With respect to regulation, activity is up-regulated by PRK2/PKN2-mediated phosphorylation. Its function is as follows. Packages viral RNA to form a viral nucleocapsid, and promotes virion budding. Participates in the viral particle production as a result of its interaction with the non-structural protein 5A. Binds RNA and may function as a RNA chaperone to induce the RNA structural rearrangements taking place during virus replication. Modulates viral translation initiation by interacting with viral IRES and 40S ribosomal subunit. Affects various cell signaling pathways, host immunity and lipid metabolism. Prevents the establishment of cellular antiviral state by blocking the interferon-alpha/beta (IFN-alpha/beta) and IFN-gamma signaling pathways and by blocking the formation of phosphorylated STAT1 and promoting ubiquitin-mediated proteasome-dependent degradation of STAT1. Activates STAT3 leading to cellular transformation. Regulates the activity of cellular genes, including c-myc and c-fos. May repress the promoter of p53, and sequester CREB3 and SP110 isoform 3/Sp110b in the cytoplasm. Represses cell cycle negative regulating factor CDKN1A, thereby interrupting an important check point of normal cell cycle regulation. Targets transcription factors involved in the regulation of inflammatory responses and in the immune response: suppresses TNF-induced NF-kappa-B activation, and activates AP-1. Binds to dendritic cells (DCs) via C1QR1, resulting in down-regulation of T-lymphocytes proliferation. Alters lipid metabolism by interacting with hepatocellular proteins involved in lipid accumulation and storage. Induces up-regulation of FAS promoter activity, and thereby contributes to the increased triglyceride accumulation in hepatocytes (steatosis). Forms a heterodimer with envelope glycoprotein E2, which mediates virus attachment to the host cell, virion internalization through clathrin-dependent endocytosis and fusion with host membrane. Fusion with the host cell is most likely mediated by both E1 and E2, through conformational rearrangements of the heterodimer required for fusion rather than a classical class II fusion mechanism. E1/E2 heterodimer binds host apolipoproteins such as APOB and APOE thereby forming a lipo-viro-particle (LVP). APOE associated to the LVP allows the initial virus attachment to cell surface receptors such as the heparan sulfate proteoglycans (HSPGs), syndecan-1 (SDC1), syndecan-1 (SDC2), the low-density lipoprotein receptor (LDLR) and scavenger receptor class B type I (SCARB1). The cholesterol transfer activity of SCARB1 allows E2 exposure and binding of E2 to SCARB1 and the tetraspanin CD81. E1/E2 heterodimer binding on CD81 activates the epithelial growth factor receptor (EGFR) signaling pathway. Diffusion of the complex E1-E2-EGFR-SCARB1-CD81 to the cell lateral membrane allows further interaction with Claudin 1 (CLDN1) and occludin (OCLN) to finally trigger HCV entry. Functionally, forms a heterodimer with envelope glycoprotein E1, which mediates virus attachment to the host cell, virion internalization through clathrin-dependent endocytosis and fusion with host membrane. Fusion with the host cell is most likely mediated by both E1 and E2, through conformational rearrangements of the heterodimer required for fusion rather than a classical class II fusion mechanism. The interaction between envelope glycoprotein E2 and host apolipoprotein E/APOE allows the proper assembly, maturation and infectivity of the viral particles. This interaction is probably promoted via the up-regulation of cellular autophagy by the virus. E1/E2 heterodimer binds host apolipoproteins such as APOB and APOE thereby forming a lipo-viro-particle (LVP). APOE associated to the LVP allows the initial virus attachment to cell surface receptors such as the heparan sulfate proteoglycans (HSPGs), syndecan-1 (SDC1), syndecan-1 (SDC2), the low-density lipoprotein receptor (LDLR) and scavenger receptor class B type I (SCARB1). The cholesterol transfer activity of SCARB1 allows E2 exposure and binding of E2 to SCARB1 and the tetraspanin CD81. E1/E2 heterodimer binding on CD81 activates the epithelial growth factor receptor (EGFR) signaling pathway. Diffusion of the complex E1-E2-EGFR-SCARB1-CD81 to the cell lateral membrane allows further interaction with Claudin 1 (CLDN1) and occludin (OCLN) to finally trigger HCV entry. Inhibits host EIF2AK2/PKR activation, preventing the establishment of an antiviral state. Viral ligand for CD209/DC-SIGN and CLEC4M/DC-SIGNR, which are respectively found on dendritic cells (DCs), and on liver sinusoidal endothelial cells and macrophage-like cells of lymph node sinuses. These interactions allow the capture of circulating HCV particles by these cells and subsequent facilitated transmission to permissive cells such as hepatocytes and lymphocyte subpopulations. The interaction between E2 and host amino acid transporter complex formed by SLC3A2 and SLC7A5/LAT1 may facilitate viral entry into host cell. In terms of biological role, ion channel protein that acts as a viroporin and plays an essential role in the assembly, envelopment and secretion of viral particles. Regulates the host cell secretory pathway, which induces the intracellular retention of viral glycoproteins and favors assembly of viral particles. Creates a pore in acidic organelles and releases Ca(2+) and H(+) in the cytoplasm of infected cells, leading to a productive viral infection. High levels of cytoplasmic Ca(2+) may trigger membrane trafficking and transport of viral ER-associated proteins to viroplasms, sites of viral genome replication. This ionic imbalance induces the assembly of the inflammasome complex, which triggers the maturation of pro-IL-1beta into IL-1beta through the action of caspase-1. Targets also host mitochondria and induces mitochondrial depolarization. In addition of its role as a viroporin, acts as a lipid raft adhesion factor. Its function is as follows. Cysteine protease required for the proteolytic auto-cleavage between the non-structural proteins NS2 and NS3. The N-terminus of NS3 is required for the function of NS2 protease (active region NS2-3). Promotes the initiation of viral particle assembly by mediating the interaction between structural and non-structural proteins. Displays three enzymatic activities: serine protease with a chymotrypsin-like fold, NTPase and RNA helicase. NS3 serine protease, in association with NS4A, is responsible for the cleavages of NS3-NS4A, NS4A-NS4B, NS4B-NS5A and NS5A-NS5B. The NS3/NS4A complex prevents phosphorylation of host IRF3, thus preventing the establishment of dsRNA induced antiviral state. The NS3/NS4A complex induces host amino acid transporter component SLC3A2, thus contributing to HCV propagation. NS3 RNA helicase binds to RNA and unwinds both dsDNA and dsRNA in the 3' to 5' direction, and likely resolves RNA complicated stable secondary structures in the template strand. Binds a single ATP and catalyzes the unzipping of a single base pair of dsRNA. Inhibits host antiviral proteins TBK1 and IRF3 thereby preventing the establishment of an antiviral state. Cleaves host MAVS/CARDIF thereby preventing the establishment of an antiviral state. Cleaves host TICAM1/TRIF, thereby disrupting TLR3 signaling and preventing the establishment of an antiviral state. Functionally, induces a specific membrane alteration that serves as a scaffold for the virus replication complex. This membrane alteration gives rise to the so-called ER-derived membranous web that contains the replication complex. NS4B self-interaction contributes to its function in membranous web formation. Promotes host TRIF protein degradation in a CASP8-dependent manner thereby inhibiting host TLR3-mediated interferon signaling. Disrupts the interaction between STING and TBK1 contributing to the inhibition of interferon signaling. In terms of biological role, phosphorylated protein that is indispensable for viral replication and assembly. Both hypo- and hyperphosphorylated states are required for the viral life cycle. The hyperphosphorylated form of NS5A is an inhibitor of viral replication. Involved in RNA-binding and especially in binding to the viral genome. Zinc is essential for RNA-binding. Participates in the viral particle production as a result of its interaction with the mature viral core protein. Its interaction with host VAPB may target the viral replication complex to vesicles. Down-regulates viral IRES translation initiation. Mediates interferon resistance, presumably by interacting with and inhibiting host EIF2AK2/PKR. Prevents BIN1-induced apoptosis. Acts as a transcriptional activator of some host genes important for viral replication when localized in the nucleus. Via the interaction with host PACSIN2, modulates lipid droplet formation in order to promote virion assembly. Modulates TNFRSF21/DR6 signaling pathway for viral propagation. Its function is as follows. RNA-dependent RNA polymerase that performs primer-template recognition and RNA synthesis during viral replication. Initiates RNA transcription/replication at a flavin adenine dinucleotide (FAD), resulting in a 5'- FAD cap on viral RNAs. In this way, recognition of viral 5' RNA by host pattern recognition receptors can be bypassed, thereby evading activation of antiviral pathways. This Homo sapiens (Human) protein is Genome polyprotein.